We begin with the raw amino-acid sequence, 319 residues long: 4-hydroxy-3-methylbut-2-enyl diphosphate reductase (319 aa).

Cys15 contacts [4Fe-4S] cluster. (2E)-4-hydroxy-3-methylbut-2-enyl diphosphate-binding residues include His44 and His77. Positions 44 and 77 each coordinate dimethylallyl diphosphate. Residues His44 and His77 each contribute to the isopentenyl diphosphate site. Cys99 contacts [4Fe-4S] cluster. His127 is a (2E)-4-hydroxy-3-methylbut-2-enyl diphosphate binding site. His127 contributes to the dimethylallyl diphosphate binding site. Isopentenyl diphosphate is bound at residue His127. The active-site Proton donor is the Glu129. A (2E)-4-hydroxy-3-methylbut-2-enyl diphosphate-binding site is contributed by Thr172. Cys202 serves as a coordination point for [4Fe-4S] cluster. Residues Ser230, Ser231, Asn232, and Ser274 each contribute to the (2E)-4-hydroxy-3-methylbut-2-enyl diphosphate site. Positions 230, 231, 232, and 274 each coordinate dimethylallyl diphosphate. Residues Ser230, Ser231, Asn232, and Ser274 each contribute to the isopentenyl diphosphate site.

Belongs to the IspH family. Requires [4Fe-4S] cluster as cofactor.

The enzyme catalyses isopentenyl diphosphate + 2 oxidized [2Fe-2S]-[ferredoxin] + H2O = (2E)-4-hydroxy-3-methylbut-2-enyl diphosphate + 2 reduced [2Fe-2S]-[ferredoxin] + 2 H(+). It carries out the reaction dimethylallyl diphosphate + 2 oxidized [2Fe-2S]-[ferredoxin] + H2O = (2E)-4-hydroxy-3-methylbut-2-enyl diphosphate + 2 reduced [2Fe-2S]-[ferredoxin] + 2 H(+). It participates in isoprenoid biosynthesis; dimethylallyl diphosphate biosynthesis; dimethylallyl diphosphate from (2E)-4-hydroxy-3-methylbutenyl diphosphate: step 1/1. Its pathway is isoprenoid biosynthesis; isopentenyl diphosphate biosynthesis via DXP pathway; isopentenyl diphosphate from 1-deoxy-D-xylulose 5-phosphate: step 6/6. Catalyzes the conversion of 1-hydroxy-2-methyl-2-(E)-butenyl 4-diphosphate (HMBPP) into a mixture of isopentenyl diphosphate (IPP) and dimethylallyl diphosphate (DMAPP). Acts in the terminal step of the DOXP/MEP pathway for isoprenoid precursor biosynthesis. The sequence is that of 4-hydroxy-3-methylbut-2-enyl diphosphate reductase from Xanthomonas euvesicatoria pv. vesicatoria (strain 85-10) (Xanthomonas campestris pv. vesicatoria).